Here is a 149-residue protein sequence, read N- to C-terminus: Cytochrome c-type biogenesis protein CcmE (149 aa).

The Cytoplasmic segment spans residues M1 to R7. Residues L8 to A28 traverse the membrane as a helical; Signal-anchor for type II membrane protein segment. Residues F29–K149 lie on the Periplasmic side of the membrane. Heme contacts are provided by H123 and Y127.

The protein belongs to the CcmE/CycJ family.

It localises to the cell inner membrane. Heme chaperone required for the biogenesis of c-type cytochromes. Transiently binds heme delivered by CcmC and transfers the heme to apo-cytochromes in a process facilitated by CcmF and CcmH. The protein is Cytochrome c-type biogenesis protein CcmE of Polaromonas naphthalenivorans (strain CJ2).